Consider the following 907-residue polypeptide: Protein translocase subunit SecA (907 aa).

ATP-binding positions include Gln87, 105 to 109 (GEGKT), and Asp510. Zn(2+)-binding residues include Cys892, Cys894, Cys903, and His904.

The protein belongs to the SecA family. Monomer and homodimer. Part of the essential Sec protein translocation apparatus which comprises SecA, SecYEG and auxiliary proteins SecDF-YajC and YidC. Zn(2+) serves as cofactor.

The protein resides in the cell inner membrane. It is found in the cytoplasm. It carries out the reaction ATP + H2O + cellular proteinSide 1 = ADP + phosphate + cellular proteinSide 2.. Part of the Sec protein translocase complex. Interacts with the SecYEG preprotein conducting channel. Has a central role in coupling the hydrolysis of ATP to the transfer of proteins into and across the cell membrane, serving both as a receptor for the preprotein-SecB complex and as an ATP-driven molecular motor driving the stepwise translocation of polypeptide chains across the membrane. The sequence is that of Protein translocase subunit SecA from Acinetobacter baumannii (strain ATCC 17978 / DSM 105126 / CIP 53.77 / LMG 1025 / NCDC KC755 / 5377).